Reading from the N-terminus, the 102-residue chain is MAENKMRIKLKGYDHAIVDQSITKIIQAAEGTGAKVRGPIPLPTEKQVITILRAVHKYKDSREQFEMRTHKRLLEILNPTAATMDVLKRVQLPSGVDIEIKL.

The protein belongs to the universal ribosomal protein uS10 family. As to quaternary structure, part of the 30S ribosomal subunit.

Functionally, involved in the binding of tRNA to the ribosomes. The chain is Small ribosomal subunit protein uS10 from Mycoplasma capricolum subsp. capricolum (strain California kid / ATCC 27343 / NCTC 10154).